The chain runs to 325 residues: Lipoyl synthase (325 aa).

The disordered stretch occupies residues M1–K24. [4Fe-4S] cluster is bound by residues C54, C59, C65, C80, C84, C87, and S293. Positions W66–L282 constitute a Radical SAM core domain.

It belongs to the radical SAM superfamily. Lipoyl synthase family. The cofactor is [4Fe-4S] cluster.

It is found in the cytoplasm. The enzyme catalyses [[Fe-S] cluster scaffold protein carrying a second [4Fe-4S](2+) cluster] + N(6)-octanoyl-L-lysyl-[protein] + 2 oxidized [2Fe-2S]-[ferredoxin] + 2 S-adenosyl-L-methionine + 4 H(+) = [[Fe-S] cluster scaffold protein] + N(6)-[(R)-dihydrolipoyl]-L-lysyl-[protein] + 4 Fe(3+) + 2 hydrogen sulfide + 2 5'-deoxyadenosine + 2 L-methionine + 2 reduced [2Fe-2S]-[ferredoxin]. It functions in the pathway protein modification; protein lipoylation via endogenous pathway; protein N(6)-(lipoyl)lysine from octanoyl-[acyl-carrier-protein]: step 2/2. Its function is as follows. Catalyzes the radical-mediated insertion of two sulfur atoms into the C-6 and C-8 positions of the octanoyl moiety bound to the lipoyl domains of lipoate-dependent enzymes, thereby converting the octanoylated domains into lipoylated derivatives. This Rhodospirillum centenum (strain ATCC 51521 / SW) protein is Lipoyl synthase.